The chain runs to 159 residues: Ribonuclease H (159 aa).

In terms of domain architecture, RNase H type-1 spans 1–145 (MTHIRAIYTD…CDLIARRLSR (145 aa)). Positions 10, 49, 74, and 137 each coordinate Mg(2+).

This sequence belongs to the RNase H family. Monomer. Requires Mg(2+) as cofactor.

Its subcellular location is the cytoplasm. It catalyses the reaction Endonucleolytic cleavage to 5'-phosphomonoester.. Its function is as follows. Endonuclease that specifically degrades the RNA of RNA-DNA hybrids. The protein is Ribonuclease H of Thermosynechococcus vestitus (strain NIES-2133 / IAM M-273 / BP-1).